Consider the following 142-residue polypeptide: Transcriptional regulator MraZ (142 aa).

SpoVT-AbrB domains follow at residues 5 to 51 (ASSL…PRPV) and 77 to 120 (ASDV…DATK).

This sequence belongs to the MraZ family. In terms of assembly, forms oligomers.

The protein resides in the cytoplasm. Its subcellular location is the nucleoid. The chain is Transcriptional regulator MraZ from Janthinobacterium sp. (strain Marseille) (Minibacterium massiliensis).